Reading from the N-terminus, the 238-residue chain is Probable solute-binding protein AdeT2 (238 aa).

This sequence belongs to the bacterial solute-binding protein 7 family.

In terms of biological role, mediates antimicrobial resistance via active efflux. Contributes to resistance to antibiotics such as chloramphenicol, erythromycin and novobiocin. May be part of a tripartite ATP-independent periplasmic (TRAP) transport system. This Acinetobacter baumannii protein is Probable solute-binding protein AdeT2.